Here is a 177-residue protein sequence, read N- to C-terminus: Large ribosomal subunit protein uL10 (177 aa).

It belongs to the universal ribosomal protein uL10 family. In terms of assembly, part of the ribosomal stalk of the 50S ribosomal subunit. The N-terminus interacts with L11 and the large rRNA to form the base of the stalk. The C-terminus forms an elongated spine to which L12 dimers bind in a sequential fashion forming a multimeric L10(L12)X complex.

Forms part of the ribosomal stalk, playing a central role in the interaction of the ribosome with GTP-bound translation factors. This chain is Large ribosomal subunit protein uL10, found in Leptospira borgpetersenii serovar Hardjo-bovis (strain JB197).